The following is a 166-amino-acid chain: Prorelaxin H2 (166 aa).

The signal sequence occupies residues 1–5; sequence SRAVA. 3 disulfide bridges follow: Cys-16–Cys-153, Cys-28–Cys-166, and Cys-152–Cys-157. Residues 37–138 constitute a propeptide, connecting peptide; that stretch reads SLSQEDAPQT…LKYLGLDTHS (102 aa).

It belongs to the insulin family. Heterodimer of a B chain and an A chain linked by two disulfide bonds. As to expression, expressed in the corpus luteum of pregnancy and in the placenta.

It localises to the secreted. Functionally, relaxin is an ovarian hormone that acts with estrogen to produce dilatation of the birth canal in many mammals. May be involved in remodeling of connective tissues during pregnancy, promoting growth of pubic ligaments and ripening of the cervix. The polypeptide is Prorelaxin H2 (RNL2) (Pan troglodytes (Chimpanzee)).